A 170-amino-acid polypeptide reads, in one-letter code: Double homeobox protein 1 (170 aa).

DNA-binding regions (homeobox) lie at residues 19 to 78 (GRRM…LRQH) and 94 to 153 (GRRK…RGQS). The tract at residues 75 to 100 (LRQHRRQSRPWPGRRDPQKGRRKRTA) is disordered.

It belongs to the paired homeobox family. As to expression, expressed in rhabdomyosarcoma TE671 cells as well as in several other normal and cancer cells.

Its subcellular location is the nucleus. Its function is as follows. Probable transcription activator. Binds the P5 DNA element sequence 5'-GATCTGAGTCTAATTGAGAATTACTGTAC-3'. The chain is Double homeobox protein 1 (DUX1) from Homo sapiens (Human).